Reading from the N-terminus, the 386-residue chain is Phosphoglycerate kinase (386 aa).

Substrate contacts are provided by residues 21 to 23, Arg-36, 59 to 62, Arg-113, and Arg-146; these read DLN and HLGR. Residues Lys-197, Glu-314, and 340 to 343 contribute to the ATP site; that span reads GGDT.

The protein belongs to the phosphoglycerate kinase family. Monomer.

It localises to the cytoplasm. It carries out the reaction (2R)-3-phosphoglycerate + ATP = (2R)-3-phospho-glyceroyl phosphate + ADP. It participates in carbohydrate degradation; glycolysis; pyruvate from D-glyceraldehyde 3-phosphate: step 2/5. This chain is Phosphoglycerate kinase, found in Vibrio campbellii (strain ATCC BAA-1116).